The sequence spans 452 residues: Probable phosphoglucosamine mutase (452 aa).

The active-site Phosphoserine intermediate is the Ser-96. Ser-96, Asp-233, Asp-235, and Asp-237 together coordinate Mg(2+). Ser-96 carries the phosphoserine modification.

This sequence belongs to the phosphohexose mutase family. Mg(2+) is required as a cofactor. Activated by phosphorylation.

The enzyme catalyses alpha-D-glucosamine 1-phosphate = D-glucosamine 6-phosphate. Its function is as follows. Catalyzes the conversion of glucosamine-6-phosphate to glucosamine-1-phosphate. This chain is Probable phosphoglucosamine mutase, found in Pyrococcus furiosus (strain ATCC 43587 / DSM 3638 / JCM 8422 / Vc1).